The primary structure comprises 157 residues: Protein TIFY 8 (157 aa).

Residues 33–68 enclose the Tify domain; that stretch reads VPGTTEQLTIFYSGSMVKFDNVPREKIRYACRLRRL. The segment at 126–147 is disordered; it reads SIGAQRTGTPPSRRRIHARGKS. Basic residues predominate over residues 137–147; sequence SRRRIHARGKS.

It belongs to the TIFY/JAZ family. Post-translationally, ubiquitinated. Targeted for degradation by the SCF(COI1) E3 ubiquitin ligase-proteasome pathway during jasmonate signaling.

Functionally, repressor of jasmonate responses. This is Protein TIFY 8 from Oryza sativa subsp. japonica (Rice).